Here is a 105-residue protein sequence, read N- to C-terminus: uncharacterized protein (105 aa).

3 helical membrane passes run 3 to 23 (ISPL…QALF), 41 to 61 (DLVN…ALVS), and 63 to 83 (AFPV…TFIY).

It localises to the cell membrane. This is an uncharacterized protein from Methanocaldococcus jannaschii (strain ATCC 43067 / DSM 2661 / JAL-1 / JCM 10045 / NBRC 100440) (Methanococcus jannaschii).